The chain runs to 184 residues: uncharacterized protein (184 aa).

The tract at residues 1–24 is disordered; the sequence is MGISDQINSNLSSQSPFTVSTNPS.

This is an uncharacterized protein from Dictyostelium discoideum (Social amoeba).